A 96-amino-acid polypeptide reads, in one-letter code: Co-chaperonin GroES (96 aa).

This sequence belongs to the GroES chaperonin family. As to quaternary structure, heptamer of 7 subunits arranged in a ring. Interacts with the chaperonin GroEL.

It is found in the cytoplasm. In terms of biological role, together with the chaperonin GroEL, plays an essential role in assisting protein folding. The GroEL-GroES system forms a nano-cage that allows encapsulation of the non-native substrate proteins and provides a physical environment optimized to promote and accelerate protein folding. GroES binds to the apical surface of the GroEL ring, thereby capping the opening of the GroEL channel. The chain is Co-chaperonin GroES from Shewanella sediminis (strain HAW-EB3).